Reading from the N-terminus, the 353-residue chain is S-adenosylmethionine:tRNA ribosyltransferase-isomerase (353 aa).

Belongs to the QueA family. As to quaternary structure, monomer.

It is found in the cytoplasm. The enzyme catalyses 7-aminomethyl-7-carbaguanosine(34) in tRNA + S-adenosyl-L-methionine = epoxyqueuosine(34) in tRNA + adenine + L-methionine + 2 H(+). It functions in the pathway tRNA modification; tRNA-queuosine biosynthesis. Its function is as follows. Transfers and isomerizes the ribose moiety from AdoMet to the 7-aminomethyl group of 7-deazaguanine (preQ1-tRNA) to give epoxyqueuosine (oQ-tRNA). This Rickettsia bellii (strain RML369-C) protein is S-adenosylmethionine:tRNA ribosyltransferase-isomerase.